The primary structure comprises 160 residues: Cyclic pyranopterin monophosphate synthase (160 aa).

Substrate contacts are provided by residues 75–77 (MCH) and 116–117 (ME). Asp131 is a catalytic residue.

This sequence belongs to the MoaC family. Homohexamer; trimer of dimers.

It catalyses the reaction (8S)-3',8-cyclo-7,8-dihydroguanosine 5'-triphosphate = cyclic pyranopterin phosphate + diphosphate. Its pathway is cofactor biosynthesis; molybdopterin biosynthesis. Its function is as follows. Catalyzes the conversion of (8S)-3',8-cyclo-7,8-dihydroguanosine 5'-triphosphate to cyclic pyranopterin monophosphate (cPMP). The protein is Cyclic pyranopterin monophosphate synthase of Staphylococcus haemolyticus (strain JCSC1435).